The primary structure comprises 137 residues: Ribosome-binding factor A (137 aa).

Belongs to the RbfA family. As to quaternary structure, monomer. Binds 30S ribosomal subunits, but not 50S ribosomal subunits or 70S ribosomes.

The protein localises to the cytoplasm. One of several proteins that assist in the late maturation steps of the functional core of the 30S ribosomal subunit. Associates with free 30S ribosomal subunits (but not with 30S subunits that are part of 70S ribosomes or polysomes). Required for efficient processing of 16S rRNA. May interact with the 5'-terminal helix region of 16S rRNA. In Erwinia tasmaniensis (strain DSM 17950 / CFBP 7177 / CIP 109463 / NCPPB 4357 / Et1/99), this protein is Ribosome-binding factor A.